The primary structure comprises 302 residues: Probable protein ABIL4 (302 aa).

Disordered regions lie at residues 151–179 and 220–256; these read PSTGHKRTQAARLQTDNGQDSKPKPYPSA and LLGKDIPASPMHKPLQPNGNTSFDAKKNVGSKDQPGF. Over residues 161 to 170 the composition is skewed to polar residues; that stretch reads ARLQTDNGQD.

This sequence belongs to the ABI family. Binds SCAR.

The protein resides in the cytoplasm. The protein localises to the cytoskeleton. Its function is as follows. Involved in regulation of actin and microtubule organization. Part of a WAVE complex that activates the Arp2/3 complex. This chain is Probable protein ABIL4, found in Oryza sativa subsp. japonica (Rice).